The following is a 528-amino-acid chain: Protein DA1-related 2 (528 aa).

Residues Ser60 to Ile108 are disordered. Positions Leu91 to Arg106 are enriched in basic and acidic residues. In terms of domain architecture, UIM 1 spans Arg99–Arg118. The 22-residue stretch at Asp127 to Pro148 folds into the UIM 2; degenerate domain. An LIM zinc-binding domain is found at Arg160–Pro220. The segment at Asp447–Lys474 is disordered. Positions Ser455 to Lys470 are enriched in low complexity.

As to quaternary structure, interacts with ubiquitin, TCP14 and TCP15. In terms of processing, polyubiquitinated by DA2. In terms of tissue distribution, expressed in the vasculature of leaves, inflorescence stems, flowers, hypocotyls, and primary and lateral roots. In roots, expressed in phloem companion cells.

In terms of biological role, acts redundantly with DA1 and DAR1 to regulate endoreduplication during leaf development. Together with DA1 and DAR1, modulates the protein stability of the transcription factors TCP14 and TCP15, which repress endoreduplication by directly regulating the expression of cell-cycle genes. Involved in root phloem development. Is an essential component of early phloem development, long-distance delivery of phloem content, and proper maintenance of root system architecture. Involved in the control of root meristem size. Functions genetically downstream of cytokinin and IAA3 to maintain normal auxin distribution by influencing polar auxin transport. Acts through the PLETHORA pathway, upstream of PLT1 and PLT2 to influence root stem cell niche activity and thus control root meristem size. The protein is Protein DA1-related 2 of Arabidopsis thaliana (Mouse-ear cress).